A 146-amino-acid polypeptide reads, in one-letter code: uncharacterized protein (146 aa).

This is an uncharacterized protein from Acidianus filamentous virus 2 (isolate Italy/Pozzuoli) (AFV-2).